The sequence spans 82 residues: ATP synthase subunit c (82 aa).

Helical transmembrane passes span 7–27 and 57–77; these read AASV…PGIG and FAFM…LLFA.

It belongs to the ATPase C chain family. F-type ATPases have 2 components, F(1) - the catalytic core - and F(0) - the membrane proton channel. F(1) has five subunits: alpha(3), beta(3), gamma(1), delta(1), epsilon(1). F(0) has four main subunits: a(1), b(1), b'(1) and c(10-14). The alpha and beta chains form an alternating ring which encloses part of the gamma chain. F(1) is attached to F(0) by a central stalk formed by the gamma and epsilon chains, while a peripheral stalk is formed by the delta, b and b' chains.

It is found in the cellular thylakoid membrane. F(1)F(0) ATP synthase produces ATP from ADP in the presence of a proton or sodium gradient. F-type ATPases consist of two structural domains, F(1) containing the extramembraneous catalytic core and F(0) containing the membrane proton channel, linked together by a central stalk and a peripheral stalk. During catalysis, ATP synthesis in the catalytic domain of F(1) is coupled via a rotary mechanism of the central stalk subunits to proton translocation. In terms of biological role, key component of the F(0) channel; it plays a direct role in translocation across the membrane. A homomeric c-ring of between 10-14 subunits forms the central stalk rotor element with the F(1) delta and epsilon subunits. This is ATP synthase subunit c from Prochlorococcus marinus (strain MIT 9303).